We begin with the raw amino-acid sequence, 150 residues long: Transcriptional regulator MraZ (150 aa).

SpoVT-AbrB domains lie at 5–52 and 81–124; these read VTHL…PLPD and AHDL…DAEA.

It belongs to the MraZ family. In terms of assembly, forms oligomers.

It localises to the cytoplasm. It is found in the nucleoid. The chain is Transcriptional regulator MraZ from Alkalilimnicola ehrlichii (strain ATCC BAA-1101 / DSM 17681 / MLHE-1).